A 136-amino-acid chain; its full sequence is Mitochondrial pyruvate carrier 1-like protein (136 aa).

The Mitochondrial matrix portion of the chain corresponds to 2–19 (ARMAVLWRKMRDNFQSKE). The chain crosses the membrane as a helical span at residues 20-42 (FREYVSSTHFWGPAFSWGLPLAA). Residues 43–51 (FKDMKASPE) are Mother cell cytoplasmic-facing. Residues 52–74 (IISGRMTTALILYSAIFMRFAYR) form a helical membrane-spanning segment. The Mitochondrial matrix segment spans residues 75–136 (VQPRNLLLMA…PGSQPPKQAS (62 aa)). The segment at 111–136 (EAKARDPPATAAAATSPGSQPPKQAS) is disordered. Residues 117–136 (PPATAAAATSPGSQPPKQAS) show a composition bias toward low complexity.

This sequence belongs to the mitochondrial pyruvate carrier (MPC) (TC 2.A.105) family.

The protein localises to the mitochondrion inner membrane. The catalysed reaction is pyruvate(out) + H(+)(out) = pyruvate(in) + H(+)(in). Its function is as follows. Mediates the uptake of pyruvate into mitochondria. This chain is Mitochondrial pyruvate carrier 1-like protein (MPC1L), found in Homo sapiens (Human).